Consider the following 236-residue polypeptide: 2,3,4,5-tetrahydropyridine-2,6-dicarboxylate N-acetyltransferase (236 aa).

This sequence belongs to the transferase hexapeptide repeat family. DapH subfamily.

The enzyme catalyses (S)-2,3,4,5-tetrahydrodipicolinate + acetyl-CoA + H2O = L-2-acetamido-6-oxoheptanedioate + CoA. The protein operates within amino-acid biosynthesis; L-lysine biosynthesis via DAP pathway; LL-2,6-diaminopimelate from (S)-tetrahydrodipicolinate (acetylase route): step 1/3. Catalyzes the transfer of an acetyl group from acetyl-CoA to tetrahydrodipicolinate. The chain is 2,3,4,5-tetrahydropyridine-2,6-dicarboxylate N-acetyltransferase from Brevibacillus brevis (strain 47 / JCM 6285 / NBRC 100599).